The following is a 143-amino-acid chain: UPF0179 protein PTO0851 (143 aa).

It belongs to the UPF0179 family.

The chain is UPF0179 protein PTO0851 from Picrophilus torridus (strain ATCC 700027 / DSM 9790 / JCM 10055 / NBRC 100828 / KAW 2/3).